We begin with the raw amino-acid sequence, 166 residues long: Transmembrane protein 278 (166 aa).

Residues 1–15 (MSDQERETEEDEGGD) show a composition bias toward acidic residues. The disordered stretch occupies residues 1–28 (MSDQERETEEDEGGDPSDTAPMLPQRLP). 3 consecutive transmembrane segments (helical) span residues 39-59 (GWAS…WALA), 65-85 (LLLP…VVYL), and 111-131 (AAVI…ASAA).

The protein belongs to the TMEM88 family.

It localises to the membrane. The sequence is that of Transmembrane protein 278 (TMEM278) from Bos taurus (Bovine).